Here is a 622-residue protein sequence, read N- to C-terminus: Calmodulin-binding protein 60 C (622 aa).

The span at 1–19 (MQTRYMERTNSMREKRKLE) shows a compositional bias: basic and acidic residues. Positions 1–35 (MQTRYMERTNSMREKRKLEEDDNQQQQQQPERKRP) are disordered. The interval 10-89 (NSMREKRKLE…RLSERSSPKR (80 aa)) is calmodulin-binding. Residues 159–282 (EDDDGWSGEE…AFHKKLNKAG (124 aa)) form a DNA-binding region.

This sequence belongs to the plant ACBP60 protein family. Interacts with calmodulin (CaM). Expressed in stems, flowers and root.

It is found in the nucleus. Transcription activator that binds DNA in a sequence-specific manner, likely 5'-GAAATTTTGG-3', to promote the expression of target genes. The chain is Calmodulin-binding protein 60 C from Arabidopsis thaliana (Mouse-ear cress).